Consider the following 96-residue polypeptide: MNLRPLHDRVIVKRLENETKTASGIVIPENAAEKPDQGEVLAVGPGKKNDKGEVIALNVKVGDRVLFGKYSGQTVKVHGDELLVMKEDDLFAVVEK.

This sequence belongs to the GroES chaperonin family. In terms of assembly, heptamer of 7 subunits arranged in a ring. Interacts with the chaperonin GroEL.

The protein resides in the cytoplasm. Together with the chaperonin GroEL, plays an essential role in assisting protein folding. The GroEL-GroES system forms a nano-cage that allows encapsulation of the non-native substrate proteins and provides a physical environment optimized to promote and accelerate protein folding. GroES binds to the apical surface of the GroEL ring, thereby capping the opening of the GroEL channel. The protein is Co-chaperonin GroES of Delftia acidovorans (strain DSM 14801 / SPH-1).